The sequence spans 283 residues: 4-diphosphocytidyl-2-C-methyl-D-erythritol kinase (283 aa).

Lys-11 is an active-site residue. 94 to 104 (PVAAGLAGGSA) lines the ATP pocket. The active site involves Asp-136.

Belongs to the GHMP kinase family. IspE subfamily.

It carries out the reaction 4-CDP-2-C-methyl-D-erythritol + ATP = 4-CDP-2-C-methyl-D-erythritol 2-phosphate + ADP + H(+). It functions in the pathway isoprenoid biosynthesis; isopentenyl diphosphate biosynthesis via DXP pathway; isopentenyl diphosphate from 1-deoxy-D-xylulose 5-phosphate: step 3/6. In terms of biological role, catalyzes the phosphorylation of the position 2 hydroxy group of 4-diphosphocytidyl-2C-methyl-D-erythritol. This chain is 4-diphosphocytidyl-2-C-methyl-D-erythritol kinase, found in Acetivibrio thermocellus (strain ATCC 27405 / DSM 1237 / JCM 9322 / NBRC 103400 / NCIMB 10682 / NRRL B-4536 / VPI 7372) (Clostridium thermocellum).